We begin with the raw amino-acid sequence, 152 residues long: Outer membrane protein assembly factor BamE (152 aa).

A signal peptide spans 1–32; sequence MIDQNHDSEEQAQMQKLTRTVTLTVALTLVSG. C33 is lipidated: N-palmitoyl cysteine. C33 carries the S-diacylglycerol cysteine lipid modification. Residues 114-152 are disordered; that stretch reads IDRHGDFSRPPSVADERGIGPTDSTNARGNLLNARPDDE.

This sequence belongs to the BamE family. In terms of assembly, part of the Bam complex.

The protein localises to the cell outer membrane. Its function is as follows. Part of the outer membrane protein assembly complex, which is involved in assembly and insertion of beta-barrel proteins into the outer membrane. The polypeptide is Outer membrane protein assembly factor BamE (Halomonas elongata (strain ATCC 33173 / DSM 2581 / NBRC 15536 / NCIMB 2198 / 1H9)).